Reading from the N-terminus, the 475-residue chain is MSEYQYNKVTPEMIEKFKEIAPKRVLVGDEINEDFTHDEMAIYGKARPEVLVEATSTEEVAAVVKLCNENKIPVTPSGARTGLVGGAVSIGGGVMISLTKMNKILGYDKENFVVKIQSGVLLNDLAQDAEKQGLLYPPDPGEKFATVGGNVATNAGGMRAVKYGCTRDYVRAMTVVLPTGEIVKLGATVSKTSSGYSLLNLMIGSEGTLGIITELTLKVIPAPKSVISLIIPYENLEDCIATVPQFFMHHLAPQALEFMEKEVVMDTEKFLGKQVYPKELEGTEIGAYLLATFDGNSEEQLEDIIEQASEVVLEAGAIDVLVADTPALKKDAWAVRGALLEAIEADTVLLDECDVVVPTNKIAEFLTYTKSLEAEADFRVKSFGHAGDGNLHIYTCSNDMEEGEFKKQVAVFMDKVYAKATEFGGMISGEHGIGHGKMDYLAESLGPVQMRIMEGVKEVFDPNMILNPGKICYKL.

Residues 43–222 (YGKARPEVLV…TELTLKVIPA (180 aa)) enclose the FAD-binding PCMH-type domain.

Belongs to the FAD-binding oxidoreductase/transferase type 4 family. It depends on FAD as a cofactor. The cofactor is Zn(2+).

The catalysed reaction is (R)-lactate + A = pyruvate + AH2. Its function is as follows. Catalyzes the dehydrogenation of (R)-lactate (D-lactate) to pyruvate. Active in vitro with the artificial electron acceptor 2,6-dichlorophenolindophenol (DCPIP), but not with NAD, NADP, or cytochrome c. Also displays a very low oxidase activity in vitro on D-lactate and L-lactate with O2 as the electron acceptor, but this activity is most likely not physiological. In Anaerostipes hadrus, this protein is D-lactate dehydrogenase.